Reading from the N-terminus, the 419-residue chain is UDP-N-acetylglucosamine 1-carboxyvinyltransferase (419 aa).

Position 22–23 (22–23 (KN)) interacts with phosphoenolpyruvate. Residue Arg91 participates in UDP-N-acetyl-alpha-D-glucosamine binding. Residue Cys115 is the Proton donor of the active site. At Cys115 the chain carries 2-(S-cysteinyl)pyruvic acid O-phosphothioketal. Residues 120-124 (RPVDL), 160-163 (KVSV), Asp305, and Ile327 each bind UDP-N-acetyl-alpha-D-glucosamine.

The protein belongs to the EPSP synthase family. MurA subfamily.

It localises to the cytoplasm. The catalysed reaction is phosphoenolpyruvate + UDP-N-acetyl-alpha-D-glucosamine = UDP-N-acetyl-3-O-(1-carboxyvinyl)-alpha-D-glucosamine + phosphate. It functions in the pathway cell wall biogenesis; peptidoglycan biosynthesis. In terms of biological role, cell wall formation. Adds enolpyruvyl to UDP-N-acetylglucosamine. This Klebsiella pneumoniae subsp. pneumoniae (strain ATCC 700721 / MGH 78578) protein is UDP-N-acetylglucosamine 1-carboxyvinyltransferase.